We begin with the raw amino-acid sequence, 95 residues long: Small ribosomal subunit protein bS20 (95 aa).

Positions 1-22 (MANIKSQIKRNRTNENNRLRNK) are disordered. A compositionally biased stretch (basic and acidic residues) spans 12–22 (RTNENNRLRNK).

This sequence belongs to the bacterial ribosomal protein bS20 family.

Binds directly to 16S ribosomal RNA. This Tropheryma whipplei (strain TW08/27) (Whipple's bacillus) protein is Small ribosomal subunit protein bS20.